A 653-amino-acid chain; its full sequence is Zinc finger CCCH domain-containing protein 54 (653 aa).

A disordered region spans residues 242–261 (NGGGGGGGSPARARRSNGLS). A C3H1-type zinc finger spans residues 260 to 287 (LSTRRPCHYFSKGICKNGQNCHYSHHQV). Residues 313–396 (SLETLEMEIT…GQHSVVLAED (84 aa)) form the HTH OST-type domain. In terms of domain architecture, RRM spans 422–497 (HQIYLTFPAE…SRVLVKPYRE (76 aa)). Residues 537–565 (RLMRKQLAEKREMLLEMERRRATVRRLES) are a coiled coil. A disordered region spans residues 598–623 (PSLASPDPLEIVSNSQAPPTQAGNIY). Residues 609-620 (VSNSQAPPTQAG) are compositionally biased toward polar residues.

The chain is Zinc finger CCCH domain-containing protein 54 from Oryza sativa subsp. japonica (Rice).